Here is a 269-residue protein sequence, read N- to C-terminus: Interleukin-1 beta (269 aa).

Residues 1–116 (MAEVPELASE…TWDNEAYVHD (116 aa)) constitute a propeptide, removed in mature form; by CASP1. Positions 228–241 (FESAQFPNWYISTS) match the Involved in interaction with TMED10 C-terminus motif.

It belongs to the IL-1 family. Monomer. In its precursor form, weakly interacts with full-length MEFV; the mature cytokine does not interact at all. Interacts with integrins ITGAV:ITGBV and ITGA5:ITGB1; integrin-binding is required for IL1B signaling. Interacts with cargo receptor TMED10; the interaction is direct and is required for the secretion of IL1B mature form. Interacts with HSP90AB1; the interaction facilitates cargo translocation into the ERGIC. Interacts with HSP90B1; the interaction facilitates cargo translocation into the ERGIC. Post-translationally, activation of the IL1B precursor involves a CASP1-catalyzed proteolytic cleavage. Processing and secretion are temporarily associated. In terms of processing, (Microbial infection) Cleavage by S.pyogenes cysteine protease SpeB promotes its activation independently of CASP1. As to expression, expressed in activated monocytes/macrophages (at protein level).

The protein localises to the cytoplasm. The protein resides in the cytosol. Its subcellular location is the secreted. It is found in the lysosome. It localises to the extracellular exosome. (Microbial infection) Cleavage by S.pyogenes cysteine protease SpeB promotes its activation independently of CASP1. SpeB-mediated maturation of IL1B plays a dual role depending on infection site: while IL1B inflammatory response prevents bacterial growth during invasive skin infections, it promotes streptococcal infection of the nasopharynx by disrupting colonization resistance mediated by the microbiota. In terms of biological role, potent pro-inflammatory cytokine. Initially discovered as the major endogenous pyrogen, induces prostaglandin synthesis, neutrophil influx and activation, T-cell activation and cytokine production, B-cell activation and antibody production, and fibroblast proliferation and collagen production. Promotes Th17 differentiation of T-cells. Synergizes with IL12/interleukin-12 to induce IFNG synthesis from T-helper 1 (Th1) cells. Plays a role in angiogenesis by inducing VEGF production synergistically with TNF and IL6. Involved in transduction of inflammation downstream of pyroptosis: its mature form is specifically released in the extracellular milieu by passing through the gasdermin-D (GSDMD) pore. Acts as a sensor of S.pyogenes infection in skin: cleaved and activated by pyogenes SpeB protease, leading to an inflammatory response that prevents bacterial growth during invasive skin infection. The sequence is that of Interleukin-1 beta from Homo sapiens (Human).